Here is a 346-residue protein sequence, read N- to C-terminus: Glycerol-3-phosphate dehydrogenase [NAD(P)+] (346 aa).

NADPH contacts are provided by Ser-15, Trp-16, Arg-36, and Lys-110. Residues Lys-110, Gly-139, and Ser-141 each contribute to the sn-glycerol 3-phosphate site. Residue Ala-143 coordinates NADPH. Residues Lys-194, Asp-247, Ser-257, Arg-258, and Asn-259 each coordinate sn-glycerol 3-phosphate. Residue Lys-194 is the Proton acceptor of the active site. Residue Arg-258 participates in NADPH binding. Residues Val-282 and Glu-284 each contribute to the NADPH site.

This sequence belongs to the NAD-dependent glycerol-3-phosphate dehydrogenase family.

It is found in the cytoplasm. The catalysed reaction is sn-glycerol 3-phosphate + NAD(+) = dihydroxyacetone phosphate + NADH + H(+). It carries out the reaction sn-glycerol 3-phosphate + NADP(+) = dihydroxyacetone phosphate + NADPH + H(+). The protein operates within membrane lipid metabolism; glycerophospholipid metabolism. Catalyzes the reduction of the glycolytic intermediate dihydroxyacetone phosphate (DHAP) to sn-glycerol 3-phosphate (G3P), the key precursor for phospholipid synthesis. The sequence is that of Glycerol-3-phosphate dehydrogenase [NAD(P)+] from Xylella fastidiosa (strain M23).